We begin with the raw amino-acid sequence, 416 residues long: Exodeoxyribonuclease 7 large subunit (416 aa).

It belongs to the XseA family. Heterooligomer composed of large and small subunits.

The protein localises to the cytoplasm. The catalysed reaction is Exonucleolytic cleavage in either 5'- to 3'- or 3'- to 5'-direction to yield nucleoside 5'-phosphates.. Functionally, bidirectionally degrades single-stranded DNA into large acid-insoluble oligonucleotides, which are then degraded further into small acid-soluble oligonucleotides. In Acidothermus cellulolyticus (strain ATCC 43068 / DSM 8971 / 11B), this protein is Exodeoxyribonuclease 7 large subunit.